A 446-amino-acid polypeptide reads, in one-letter code: 3-phosphoshikimate 1-carboxyvinyltransferase (446 aa).

Residues lysine 30, serine 31, and arginine 35 each contribute to the 3-phosphoshikimate site. Lysine 30 serves as a coordination point for phosphoenolpyruvate. The phosphoenolpyruvate site is built by glycine 112 and arginine 140. 3-phosphoshikimate is bound by residues serine 186, serine 187, glutamine 188, serine 215, glutamate 334, and histidine 361. Glutamine 188 is a binding site for phosphoenolpyruvate. Glutamate 334 (proton acceptor) is an active-site residue. 3 residues coordinate phosphoenolpyruvate: arginine 365, arginine 406, and lysine 431.

It belongs to the EPSP synthase family. As to quaternary structure, monomer.

It localises to the cytoplasm. It carries out the reaction 3-phosphoshikimate + phosphoenolpyruvate = 5-O-(1-carboxyvinyl)-3-phosphoshikimate + phosphate. It participates in metabolic intermediate biosynthesis; chorismate biosynthesis; chorismate from D-erythrose 4-phosphate and phosphoenolpyruvate: step 6/7. Catalyzes the transfer of the enolpyruvyl moiety of phosphoenolpyruvate (PEP) to the 5-hydroxyl of shikimate-3-phosphate (S3P) to produce enolpyruvyl shikimate-3-phosphate and inorganic phosphate. The sequence is that of 3-phosphoshikimate 1-carboxyvinyltransferase from Streptomyces avermitilis (strain ATCC 31267 / DSM 46492 / JCM 5070 / NBRC 14893 / NCIMB 12804 / NRRL 8165 / MA-4680).